The primary structure comprises 700 residues: Peroxisomal acyl-coenzyme A oxidase 1 (700 aa).

Residues T147, G186, and 412–417 (CGGHGY) contribute to the FAD site. E437 functions as the Proton acceptor in the catalytic mechanism. The Microbody targeting signal motif lies at 698–700 (SKL).

Belongs to the acyl-CoA oxidase family. FAD serves as cofactor.

The protein localises to the peroxisome. The catalysed reaction is a 2,3-saturated acyl-CoA + O2 = a (2E)-enoyl-CoA + H2O2. Catalyzes the desaturation of acyl-CoAs to 2-trans-enoyl-CoAs. First enzyme of the fatty acid beta-oxidation pathway. The chain is Peroxisomal acyl-coenzyme A oxidase 1 (acox1) from Dictyostelium discoideum (Social amoeba).